Here is a 227-residue protein sequence, read N- to C-terminus: Orotidine 5'-phosphate decarboxylase (227 aa).

Substrate is bound by residues D8, K30, 59-68 (DLKLYDIPYT), T118, R178, Q187, G207, and R208. Residue K61 is the Proton donor of the active site.

It belongs to the OMP decarboxylase family. Type 1 subfamily. In terms of assembly, homodimer.

It catalyses the reaction orotidine 5'-phosphate + H(+) = UMP + CO2. It participates in pyrimidine metabolism; UMP biosynthesis via de novo pathway; UMP from orotate: step 2/2. In terms of biological role, catalyzes the decarboxylation of orotidine 5'-monophosphate (OMP) to uridine 5'-monophosphate (UMP). This Helicobacter pylori (strain P12) protein is Orotidine 5'-phosphate decarboxylase.